We begin with the raw amino-acid sequence, 328 residues long: Delta-aminolevulinic acid dehydratase (328 aa).

Zn(2+)-binding residues include C122, C124, and C132. The active-site Schiff-base intermediate with substrate is the K197. 2 residues coordinate 5-aminolevulinate: R207 and R219. E235 contacts Mg(2+). K250 (schiff-base intermediate with substrate) is an active-site residue. Positions 276 and 315 each coordinate 5-aminolevulinate.

It belongs to the ALAD family. Homooctamer. Requires Zn(2+) as cofactor.

It catalyses the reaction 2 5-aminolevulinate = porphobilinogen + 2 H2O + H(+). It functions in the pathway porphyrin-containing compound metabolism; protoporphyrin-IX biosynthesis; coproporphyrinogen-III from 5-aminolevulinate: step 1/4. In terms of biological role, catalyzes an early step in the biosynthesis of tetrapyrroles. Binds two molecules of 5-aminolevulinate per subunit, each at a distinct site, and catalyzes their condensation to form porphobilinogen. This chain is Delta-aminolevulinic acid dehydratase (hemB), found in Halalkalibacterium halodurans (strain ATCC BAA-125 / DSM 18197 / FERM 7344 / JCM 9153 / C-125) (Bacillus halodurans).